A 643-amino-acid polypeptide reads, in one-letter code: Ecto-NOX disulfide-thiol exchanger 1 (643 aa).

Residues 142 to 221 enclose the RRM domain; that stretch reads KTVFVGGLPE…GRLHVDFAQA (80 aa). 2 coiled-coil regions span residues 307 to 342 and 425 to 570; these read VQSANSHVRRLMNEKATHEQEMEEAKENFKNALTGI and QAYA…EALL.

Belongs to the ENOX family. Requires Cu cation as cofactor. As to expression, expressed in lymphocyte cells, breast and breast cancer (at protein level). Found in the sera of cancer patients with a wide variety of cancers including breast, prostate, lung and ovarian cancers, leukemias, and lymphomas. Found also in the serum of healthy volunteers or patients with disorders other than cancer. Probably shed into serum by cancer cells.

It is found in the cell membrane. The protein localises to the secreted. It localises to the extracellular space. With respect to regulation, not inhibited by the antitumor sulfonylurea LY181984, the vabilloid capsaicin, and retinoids. Functionally, probably acts as a terminal oxidase of plasma electron transport from cytosolic NAD(P)H via hydroquinones to acceptors at the cell surface. Hydroquinone oxidase activity alternates with a protein disulfide-thiol interchange/oxidoreductase activity which may control physical membrane displacements associated with vesicle budding or cell enlargement. The activities oscillate with a period length of 24 minutes and play a role in control of the ultradian cellular biological clock. The sequence is that of Ecto-NOX disulfide-thiol exchanger 1 (ENOX1) from Homo sapiens (Human).